Consider the following 234-residue polypeptide: Large ribosomal subunit protein uL1 (234 aa).

This sequence belongs to the universal ribosomal protein uL1 family. In terms of assembly, part of the 50S ribosomal subunit.

Binds directly to 23S rRNA. The L1 stalk is quite mobile in the ribosome, and is involved in E site tRNA release. Its function is as follows. Protein L1 is also a translational repressor protein, it controls the translation of the L11 operon by binding to its mRNA. This chain is Large ribosomal subunit protein uL1, found in Escherichia coli O127:H6 (strain E2348/69 / EPEC).